Here is a 371-residue protein sequence, read N- to C-terminus: Putative glutamate--cysteine ligase 2 (371 aa).

This sequence belongs to the glutamate--cysteine ligase type 2 family. YbdK subfamily.

The enzyme catalyses L-cysteine + L-glutamate + ATP = gamma-L-glutamyl-L-cysteine + ADP + phosphate + H(+). In terms of biological role, ATP-dependent carboxylate-amine ligase which exhibits weak glutamate--cysteine ligase activity. This chain is Putative glutamate--cysteine ligase 2, found in Burkholderia ambifaria (strain MC40-6).